The primary structure comprises 252 residues: Urease accessory protein UreH (252 aa).

This sequence belongs to the UreD family. As to quaternary structure, ureH, UreF and UreG form a complex that acts as a GTP-hydrolysis-dependent molecular chaperone, activating the urease apoprotein by helping to assemble the nickel containing metallocenter of UreC. The UreE protein probably delivers the nickel.

Its subcellular location is the cytoplasm. Functionally, required for maturation of urease via the functional incorporation of the urease nickel metallocenter. The chain is Urease accessory protein UreH from Helicobacter hepaticus (strain ATCC 51449 / 3B1).